Here is a 338-residue protein sequence, read N- to C-terminus: Aspartate-semialdehyde dehydrogenase (338 aa).

Residues 13 to 16 (TGAV) and 41 to 42 (RS) each bind NADP(+). Phosphate is bound at residue Arg-101. Cys-130 serves as the catalytic Acyl-thioester intermediate. Residue Gln-157 coordinates substrate. Residue 160 to 161 (SG) participates in NADP(+) binding. Position 214 (Lys-214) interacts with phosphate. Arg-236 lines the substrate pocket. His-243 acts as the Proton acceptor in catalysis. Position 316 (Gln-316) interacts with NADP(+).

It belongs to the aspartate-semialdehyde dehydrogenase family. As to quaternary structure, homodimer.

It carries out the reaction L-aspartate 4-semialdehyde + phosphate + NADP(+) = 4-phospho-L-aspartate + NADPH + H(+). It functions in the pathway amino-acid biosynthesis; L-lysine biosynthesis via DAP pathway; (S)-tetrahydrodipicolinate from L-aspartate: step 2/4. It participates in amino-acid biosynthesis; L-methionine biosynthesis via de novo pathway; L-homoserine from L-aspartate: step 2/3. Its pathway is amino-acid biosynthesis; L-threonine biosynthesis; L-threonine from L-aspartate: step 2/5. In terms of biological role, catalyzes the NADPH-dependent formation of L-aspartate-semialdehyde (L-ASA) by the reductive dephosphorylation of L-aspartyl-4-phosphate. This is Aspartate-semialdehyde dehydrogenase (asd) from Synechocystis sp. (strain ATCC 27184 / PCC 6803 / Kazusa).